A 552-amino-acid polypeptide reads, in one-letter code: Leucine-rich repeat-containing protein 31 (552 aa).

Residues methionine 1–glutamate 65 are disordered. The segment covering glutamate 31–threonine 41 has biased composition (basic and acidic residues). Residues serine 42 to threonine 58 show a composition bias toward polar residues. LRR repeat units lie at residues serine 227–isoleucine 246, asparagine 255–aspartate 275, glutamate 283–lysine 293, histidine 311–threonine 331, asparagine 339–serine 360, alanine 367–alanine 387, alanine 395–leucine 415, serine 423–alanine 443, and lysine 453–glutamine 475.

This Homo sapiens (Human) protein is Leucine-rich repeat-containing protein 31 (LRRC31).